The sequence spans 407 residues: Resuscitation-promoting factor RpfA (407 aa).

A signal peptide spans 1-33 (MSGRHRKPTTSNVSVAKIAFTGAVLGGGGIAMA). Disordered stretches follow at residues 142–253 (VNGE…ADLA) and 271–371 (LPAA…AETP). Residues 148–159 (PLAPPPADPAPP) show a composition bias toward pro residues. Residues 160-170 (VELAANDLPAP) are compositionally biased toward low complexity. Residues 171–193 (LGEPLPAAPADPAPPADLAPPAP) show a composition bias toward pro residues. Tandem repeats lie at residues 178–185 (APADPAPP) and 186–193 (ADLAPPAP). Residues 178-359 (APADPAPPAD…PDPQPADAPP (182 aa)) form a 12 X 8 AA approximate repeats of A-P-A-D-L-A-P-P region. A compositionally biased stretch (low complexity) spans 194-210 (ADVAPPVELAVNDLPAP). A compositionally biased stretch (pro residues) spans 211-249 (LGEPLPAAPADPAPPADLAPPAPADLAPPAPADLAPPAP). 10 tandem repeats follow at residues 218 to 225 (APADPAPP), 226 to 233 (ADLAPPAP), 240 to 247 (APADLAPP), 248 to 255 (APADLAPP), 274 to 281 (APAELAPP), 287 to 294 (ASADLAPP), 295 to 302 (APADLAPP), 303 to 310 (APAELAPP), 311 to 318 (APADLAPP), and 353 to 359 (QPADAPP). The segment covering 274–292 (APAELAPPADLAPASADLA) has biased composition (low complexity). 2 stretches are compositionally biased toward pro residues: residues 293–312 (PPAPADLAPPAPAELAPPAP) and 350–361 (PDPQPADAPPPG).

Belongs to the transglycosylase family. Rpf subfamily.

Functionally, factor that stimulates resuscitation of dormant cells. Has peptidoglycan (PG) hydrolytic activity. The chain is Resuscitation-promoting factor RpfA (rpfA) from Mycobacterium tuberculosis (strain CDC 1551 / Oshkosh).